We begin with the raw amino-acid sequence, 128 residues long: Small nuclear ribonucleoprotein SmD3a (128 aa).

The Sm domain occupies I7–L79. Residues G90 to R128 are disordered. The segment covering T112–G121 has biased composition (gly residues).

Belongs to the snRNP core protein family. Expressed in young seedlings, roots, leaves, flowers and immature siliques.

It localises to the cytoplasm. Its subcellular location is the cytosol. The protein resides in the nucleus. In terms of biological role, core component of the spliceosomal U1, U2, U4 and U5 small nuclear ribonucleoproteins (snRNPs), the building blocks of the spliceosome. May play a minor role in the splicing of cellular pre-mRNAs. The polypeptide is Small nuclear ribonucleoprotein SmD3a (Arabidopsis thaliana (Mouse-ear cress)).